A 179-amino-acid chain; its full sequence is Serglycin (179 aa).

Residues 1 to 26 (MRQVPVGTRLVLALAFVLVWGSSVQG) form the signal peptide. The propeptide at 27–75 (YPARRARYQWVRCKPDGIFANCIEEKGPRFDLIAEESNVGPPMTDPVLM) is activation peptide. The cysteines at positions 39 and 48 are disulfide-linked. A disordered region spans residues 86-145 (SDDYSGSGSGSGSGSGSGSGSGSGSGSGSGSGSGSGSGSGSGSGSGSGSGSGSLADMEWE). 2 O-linked (Xyl...) (glycosaminoglycan) serine glycosylation sites follow: S90 and S92. 24 repeat units span residues 90 to 91 (SG), 92 to 93 (SG), 94 to 95 (SG), 96 to 97 (SG), 98 to 99 (SG), 100 to 101 (SG), 102 to 103 (SG), 104 to 105 (SG), 106 to 107 (SG), 108 to 109 (SG), 110 to 111 (SG), 112 to 113 (SG), 114 to 115 (SG), 116 to 117 (SG), 118 to 119 (SG), 120 to 121 (SG), 122 to 123 (SG), 124 to 125 (SG), 126 to 127 (SG), 128 to 129 (SG), 130 to 131 (SG), 132 to 133 (SG), 134 to 135 (SG), and 136 to 137 (SG). Residues 90 to 137 (SGSGSGSGSGSGSGSGSGSGSGSGSGSGSGSGSGSGSGSGSGSGSGSG) are 24 X 2 AA tandem repeats of S-G. Over residues 92-136 (SGSGSGSGSGSGSGSGSGSGSGSGSGSGSGSGSGSGSGSGSGSGS) the composition is skewed to gly residues. 6 O-linked (Xyl...) (glycosaminoglycan) serine glycosylation sites follow: S96, S98, S100, S102, S104, and S106.

The protein belongs to the serglycin family. As to quaternary structure, binds to activated CD44 and to GZMB. In terms of processing, O-glycosylated; contains chondroitin sulfate and heparan sulfate.

It localises to the cytoplasmic granule. It is found in the cytolytic granule. Its subcellular location is the secreted. The protein localises to the extracellular space. The protein resides in the golgi apparatus. Plays a role in formation of mast cell secretory granules and mediates storage of various compounds in secretory vesicles. Required for storage of some proteases in both connective tissue and mucosal mast cells and for storage of granzyme B in T-lymphocytes. Plays a role in localizing neutrophil elastase in azurophil granules of neutrophils. Mediates processing of MMP2. Plays a role in cytotoxic cell granule-mediated apoptosis by forming a complex with granzyme B which is delivered to cells by perforin to induce apoptosis. Regulates the secretion of TNF-alpha and may also regulate protease secretion. Inhibits bone mineralization. The chain is Serglycin (Srgn) from Rattus norvegicus (Rat).